Here is a 306-residue protein sequence, read N- to C-terminus: MNVAVQSRVDRETIGVARKTKAYVALTKPRVIELLLVTTAPVMILAQGGWPNPWLILGVLVGGTLSAGSANAFNCYIDRDIDRVMKRTQRRPLVTGELTDREALVFAWIIGVASIIWLGVISNWLAAALSLAAILFYVFVYTLWLKRRTPQNIVWGGAAGCMPVLIGWAAVTGDISWAPVILFMIVFLWTPPHYWPLSMKYRDDYASVNVPMLAVVRGRAAVGLQTILYSWATLACSLLLIPVAGMGLVYTLAALAGGGWFVYETHRLYDLAVRHEPIKPMRVFHASISYLSLLFLAVGIDPLLPF.

8 helical membrane passes run 31 to 50 (VIELLLVTTAPVMILAQGGW), 55 to 77 (LILGVLVGGTLSAGSANAFNCYI), 104 to 124 (LVFAWIIGVASIIWLGVISNW), 125 to 145 (LAAALSLAAILFYVFVYTLWL), 168 to 188 (WAAVTGDISWAPVILFMIVFL), 218 to 235 (GRAAVGLQTILYSWATLA), 238 to 258 (LLLIPVAGMGLVYTLAALAGG), and 286 to 306 (ASISYLSLLFLAVGIDPLLPF).

It belongs to the UbiA prenyltransferase family. Protoheme IX farnesyltransferase subfamily.

The protein localises to the cell membrane. The enzyme catalyses heme b + (2E,6E)-farnesyl diphosphate + H2O = Fe(II)-heme o + diphosphate. It functions in the pathway porphyrin-containing compound metabolism; heme O biosynthesis; heme O from protoheme: step 1/1. Functionally, converts heme B (protoheme IX) to heme O by substitution of the vinyl group on carbon 2 of heme B porphyrin ring with a hydroxyethyl farnesyl side group. This Clavibacter sepedonicus (Clavibacter michiganensis subsp. sepedonicus) protein is Protoheme IX farnesyltransferase.